The following is a 276-amino-acid chain: MHPAAEHSPLGKSSEYIATYSPEQLFPIPRTAKWAELGVTAQTLPWQGVDYWNCFELSWLLPSGKPVVAIGEFAIPADSPNIIESKSFKLYLNSLNQTVFTSLGALQVCLEKDLSAAAGKPVGVKVRTLAEVEAQGVVALPGQCIDALDVAISNYEQPQPELLRCNPERVVEETLHSHLLKSNCPVTGQPDWGSVVVQYKGRALDHASLLTYLISFRQHADFHEQCVERIYLDLKNLLQPEHLTVYARYVRRGGLDINPYRSTGPISPDNKRLVRQ.

83–85 (IES) lines the substrate pocket. 85–86 (SK) contacts NADPH. Cys184 functions as the Thioimide intermediate in the catalytic mechanism. Catalysis depends on Asp191, which acts as the Proton donor. 223-224 (HE) lines the substrate pocket. An NADPH-binding site is contributed by 252–253 (RG).

This sequence belongs to the GTP cyclohydrolase I family. QueF type 2 subfamily. In terms of assembly, homodimer.

It is found in the cytoplasm. The catalysed reaction is 7-aminomethyl-7-carbaguanine + 2 NADP(+) = 7-cyano-7-deazaguanine + 2 NADPH + 3 H(+). Its pathway is tRNA modification; tRNA-queuosine biosynthesis. Its function is as follows. Catalyzes the NADPH-dependent reduction of 7-cyano-7-deazaguanine (preQ0) to 7-aminomethyl-7-deazaguanine (preQ1). This chain is NADPH-dependent 7-cyano-7-deazaguanine reductase, found in Pseudomonas putida (strain ATCC 47054 / DSM 6125 / CFBP 8728 / NCIMB 11950 / KT2440).